Consider the following 275-residue polypeptide: Homeobox protein Hox-C12a (275 aa).

Disordered regions lie at residues 101–129 and 148–213; these read SREN…DHGM and QLTQ…KRKP. Over residues 155–177 the composition is skewed to low complexity; it reads SCQSMESDSSSSLLNEASKPSSS. The segment covering 178-194 has biased composition (polar residues); it reads DTQTLVSPGSHTGTITA. Residues 207–266 constitute a DNA-binding region (homeobox); it reads TRKKRKPYSKLQLAELEGEFMMNEFITRQRRRELSDRLNLSDQQVKIWFQNRRMKKKRLM.

Belongs to the Abd-B homeobox family.

The protein resides in the nucleus. Its function is as follows. Sequence-specific transcription factor which is part of a developmental regulatory system that provides cells with specific positional identities on the anterior-posterior axis. This Takifugu rubripes (Japanese pufferfish) protein is Homeobox protein Hox-C12a (hoxc12a).